The following is a 117-amino-acid chain: MDKKQTRLRRARKTRARIAELKMVRLSVHRTNSHIYAQIIDETGNKVLASASSLEADVRSAMANGGNVAAAAVIGKRIAEKAKAAGIEQVAFDRSGFKYHGRMKALADAAREHGLVF.

It belongs to the universal ribosomal protein uL18 family. As to quaternary structure, part of the 50S ribosomal subunit; part of the 5S rRNA/L5/L18/L25 subcomplex. Contacts the 5S and 23S rRNAs.

In terms of biological role, this is one of the proteins that bind and probably mediate the attachment of the 5S RNA into the large ribosomal subunit, where it forms part of the central protuberance. This is Large ribosomal subunit protein uL18 from Chromobacterium violaceum (strain ATCC 12472 / DSM 30191 / JCM 1249 / CCUG 213 / NBRC 12614 / NCIMB 9131 / NCTC 9757 / MK).